The chain runs to 400 residues: Acetate kinase (400 aa).

Residue asparagine 10 participates in Mg(2+) binding. Lysine 17 serves as a coordination point for ATP. Arginine 89 lines the substrate pocket. The active-site Proton donor/acceptor is the aspartate 148. ATP is bound by residues 208-212 (HLGNG), 283-285 (DCR), and 331-335 (GIGEN). Glutamate 385 serves as a coordination point for Mg(2+).

The protein belongs to the acetokinase family. As to quaternary structure, homodimer. The cofactor is Mg(2+). It depends on Mn(2+) as a cofactor.

The protein resides in the cytoplasm. The enzyme catalyses acetate + ATP = acetyl phosphate + ADP. It functions in the pathway metabolic intermediate biosynthesis; acetyl-CoA biosynthesis; acetyl-CoA from acetate: step 1/2. Its function is as follows. Catalyzes the formation of acetyl phosphate from acetate and ATP. Can also catalyze the reverse reaction. The polypeptide is Acetate kinase (Haemophilus ducreyi (strain 35000HP / ATCC 700724)).